A 258-amino-acid polypeptide reads, in one-letter code: Imidazole glycerol phosphate synthase subunit HisF (258 aa).

Catalysis depends on residues aspartate 11 and aspartate 130.

This sequence belongs to the HisA/HisF family. Heterodimer of HisH and HisF.

It localises to the cytoplasm. It carries out the reaction 5-[(5-phospho-1-deoxy-D-ribulos-1-ylimino)methylamino]-1-(5-phospho-beta-D-ribosyl)imidazole-4-carboxamide + L-glutamine = D-erythro-1-(imidazol-4-yl)glycerol 3-phosphate + 5-amino-1-(5-phospho-beta-D-ribosyl)imidazole-4-carboxamide + L-glutamate + H(+). Its pathway is amino-acid biosynthesis; L-histidine biosynthesis; L-histidine from 5-phospho-alpha-D-ribose 1-diphosphate: step 5/9. Functionally, IGPS catalyzes the conversion of PRFAR and glutamine to IGP, AICAR and glutamate. The HisF subunit catalyzes the cyclization activity that produces IGP and AICAR from PRFAR using the ammonia provided by the HisH subunit. The sequence is that of Imidazole glycerol phosphate synthase subunit HisF from Methylorubrum extorquens (strain CM4 / NCIMB 13688) (Methylobacterium extorquens).